A 422-amino-acid chain; its full sequence is Dihydrolipoyllysine-residue succinyltransferase component of 2-oxoglutarate dehydrogenase complex (422 aa).

The Lipoyl-binding domain maps to Met1–Gly76. Lys42 carries the post-translational modification N6-lipoyllysine. Positions Glu77–Asn184 are disordered. Polar residues-rich tracts occupy residues Gly80–Gln94 and Asn116–Pro130. Positions Asn127–Gln163 constitute a Peripheral subunit-binding (PSBD) domain. Residues Asp152 to Gln163 are compositionally biased toward basic and acidic residues. The segment covering Gln164–Pro176 has biased composition (low complexity). Residues His393 and Asp397 contribute to the active site.

This sequence belongs to the 2-oxoacid dehydrogenase family. In terms of assembly, forms a 24-polypeptide structural core with octahedral symmetry. Part of the 2-oxoglutarate dehydrogenase (OGDH) complex composed of E1 (2-oxoglutarate dehydrogenase), E2 (dihydrolipoamide succinyltransferase) and E3 (dihydrolipoamide dehydrogenase); the complex contains multiple copies of the three enzymatic components (E1, E2 and E3). Requires (R)-lipoate as cofactor.

The enzyme catalyses N(6)-[(R)-dihydrolipoyl]-L-lysyl-[protein] + succinyl-CoA = N(6)-[(R)-S(8)-succinyldihydrolipoyl]-L-lysyl-[protein] + CoA. It participates in amino-acid degradation; L-lysine degradation via saccharopine pathway; glutaryl-CoA from L-lysine: step 6/6. In terms of biological role, E2 component of the 2-oxoglutarate dehydrogenase (OGDH) complex which catalyzes the second step in the conversion of 2-oxoglutarate to succinyl-CoA and CO(2). This is Dihydrolipoyllysine-residue succinyltransferase component of 2-oxoglutarate dehydrogenase complex (odhB) from Staphylococcus aureus (strain Mu50 / ATCC 700699).